A 396-amino-acid polypeptide reads, in one-letter code: L-lactate dehydrogenase (396 aa).

The FMN hydroxy acid dehydrogenase domain maps to 1–380 (MIISAASDYR…TQDSLVQELS (380 aa)). Tyrosine 24 provides a ligand contact to substrate. Serine 106 and glutamine 127 together coordinate FMN. Tyrosine 129 serves as a coordination point for substrate. FMN is bound at residue threonine 155. Residue arginine 164 coordinates substrate. Lysine 251 lines the FMN pocket. Histidine 275 acts as the Proton acceptor in catalysis. Arginine 278 contacts substrate. FMN is bound at residue 306–330 (DSGIRNGLDVVRMIALGADTVLLGR).

It belongs to the FMN-dependent alpha-hydroxy acid dehydrogenase family. Requires FMN as cofactor.

It is found in the cell inner membrane. The catalysed reaction is (S)-lactate + A = pyruvate + AH2. In terms of biological role, catalyzes the conversion of L-lactate to pyruvate. Is coupled to the respiratory chain. This is L-lactate dehydrogenase from Escherichia coli (strain SMS-3-5 / SECEC).